The sequence spans 82 residues: MELDDHNGETDSVTPISQLGYEACRDELIEVVRLLEQGGLDLDTSLKLWERGEVLAKRCEEHLAGARQRVADALAASEAEQD.

It belongs to the XseB family. Heterooligomer composed of large and small subunits.

The protein resides in the cytoplasm. The enzyme catalyses Exonucleolytic cleavage in either 5'- to 3'- or 3'- to 5'-direction to yield nucleoside 5'-phosphates.. Bidirectionally degrades single-stranded DNA into large acid-insoluble oligonucleotides, which are then degraded further into small acid-soluble oligonucleotides. The protein is Exodeoxyribonuclease 7 small subunit of Mycobacterium marinum (strain ATCC BAA-535 / M).